The sequence spans 215 residues: 16S rRNA (adenine(1408)-N(1))-methyltransferase (215 aa).

S-adenosyl-L-methionine is bound by residues glycine 32, aspartate 55, 87-88 (AE), 102-107 (LMPWGS), and 191-193 (TSW).

Belongs to the methyltransferase superfamily. Kanamycin-apramycin resistance family.

The enzyme catalyses adenosine(1408) in 16S rRNA + S-adenosyl-L-methionine = N(1)-methyladenosine(1408) in 16S rRNA + S-adenosyl-L-homocysteine + H(+). Specifically methylates the N(1) position of adenine 1408 in 16S rRNA. Confers resistance to various aminoglycosides, including kanamycin, neomycin and apramycin. The protein is 16S rRNA (adenine(1408)-N(1))-methyltransferase (kamB) of Streptoalloteichus tenebrarius (strain ATCC 17920 / DSM 40477 / JCM 4838 / CBS 697.72 / NBRC 16177 / NCIMB 11028 / NRRL B-12390 / A12253. 1 / ISP 5477) (Streptomyces tenebrarius).